Reading from the N-terminus, the 908-residue chain is DNA (cytosine-5)-methyltransferase 3A (908 aa).

The span at 1 to 13 (MPSSGPGDTSSSS) shows a compositional bias: low complexity. Disordered stretches follow at residues 1–183 (MPSS…PMPR) and 226–281 (NQAS…PEYE). Residues 14–37 (LEREDDRKEGEEQEENRGKEERQE) show a composition bias toward basic and acidic residues. Residues 44–54 (KVGRPGRKRKH) show a composition bias toward basic residues. A compositionally biased stretch (polar residues) spans 69–80 (TTKSQPMAQDSG). A Phosphoserine modification is found at S102. Low complexity predominate over residues 110–124 (GAPAEGEGTETPPEA). T120 is subject to Phosphothreonine. K158 participates in a covalent cross-link: Glycyl lysine isopeptide (Lys-Gly) (interchain with G-Cter in SUMO2). R167 is modified (omega-N-methylarginine). An interaction with DNMT1 and DNMT3B region spans residues 195-399 (SKRKRDEWLA…DSGKAVEVQN (205 aa)). S239 and S251 each carry phosphoserine. The span at 242–256 (AVQQPTDPASPTVAT) shows a compositional bias: polar residues. The residue at position 257 (T257) is a Phosphothreonine. Positions 265 to 275 (AGDKNATKAAD) are enriched in basic and acidic residues. A PWWP domain is found at 288-346 (IGELVWGKLRGFSWWPGRIVSWWMTGRSRAAEGTRWVMWFGDGKFSVVCVEKLMPLSSF). Residues S386 and S389 each carry the phosphoserine modification. A disordered region spans residues 443–462 (AYAPPPPAKKPRKSTTEKPK). An ADD domain is found at 478 to 610 (EVRQKCRNIE…LQMFFANNHD (133 aa)). The segment at 489–519 (ICISCGSLNVTLEHPLFIGGMCQNCKNCFLE) adopts a GATA-type; atypical zinc-finger fold. Residues 490 to 582 (CISCGSLNVT…KEDPWNCYMC (93 aa)) form an interaction with the PRC2/EED-EZH2 complex region. Residues 530-586 (QSYCTICCGGREVLMCGNNNCCRCFCVECVDLLVGPGAAQAAIKEDPWNCYMCGHKG) form a PHD-type; atypical zinc finger. An SAM-dependent MTase C5-type domain is found at 630 to 908 (IRVLSLFDGI…APLKEYFACV (279 aa)). S-adenosyl-L-methionine is bound by residues 637-641 (DGIAT), E660, and 682-684 (DVR). The active site involves C706. S-methylcysteine; by autocatalysis is present on C706. S-adenosyl-L-methionine is bound at residue 887–889 (RSW).

It belongs to the class I-like SAM-binding methyltransferase superfamily. C5-methyltransferase family. Heterotetramer composed of 1 DNMT3A homodimer and 2 DNMT3L subunits (DNMT3L-DNMT3A-DNMT3A-DNMT3L). Interacts with DNMT1 and DNMT3B. Interacts with MPHOSPH8. Interacts with histone H3 that is not methylated at 'Lys-4' (H3K4). Binds the ZBTB18 transcriptional repressor. Interacts with SETDB1. Associates with HDAC1 through its ADD domain. Interacts with UHRF1. Interacts with the PRC2/EED-EZH2 complex. Interacts with UBC9, PIAS1 and PIAS2. Interacts with SPOCD1. Interacts with ZNF263; recruited to the SIX3 promoter along with other proteins involved in chromatin modification and transcriptional corepression where it contributes to transcriptional repression. Auto-methylated at Cys-706: auto-methylation takes place in absence of DNA substrate and inactivates the DNA methyltransferase activity. Inactivation by auto-methylation may be used to inactivate unused DNA methyltransferases in the cell. In terms of processing, sumoylated; sumoylation disrupts the ability to interact with histone deacetylases (HDAC1 and HDAC2) and repress transcription. In terms of tissue distribution, isoform 1 is expressed ubiquitously at low levels. Expression of isoform 2 is restricted to tissues containing cells which are undergoing active de novo methylation, including spleen, testis and thymus.

The protein resides in the nucleus. It is found in the chromosome. The protein localises to the cytoplasm. It catalyses the reaction a 2'-deoxycytidine in DNA + S-adenosyl-L-methionine = a 5-methyl-2'-deoxycytidine in DNA + S-adenosyl-L-homocysteine + H(+). The enzyme catalyses L-cysteinyl-[protein] + S-adenosyl-L-methionine = S-methyl-L-cysteinyl-[protein] + S-adenosyl-L-homocysteine + H(+). With respect to regulation, activated by binding to the regulatory factor DNMT3L. Auto-methylation at Cys-706 in absence of DNA inactivates the DNA methyltransferase activity. Required for genome-wide de novo methylation and is essential for the establishment of DNA methylation patterns during development. DNA methylation is coordinated with methylation of histones. It modifies DNA in a non-processive manner and also methylates non-CpG sites. May preferentially methylate DNA linker between 2 nucleosomal cores and is inhibited by histone H1. Plays a role in paternal and maternal imprinting. Required for methylation of most imprinted loci in germ cells. Acts as a transcriptional corepressor for ZBTB18. Recruited to trimethylated 'Lys-36' of histone H3 (H3K36me3) sites. Can actively repress transcription through the recruitment of HDAC activity. Also has weak auto-methylation activity on Cys-706 in absence of DNA. In Mus musculus (Mouse), this protein is DNA (cytosine-5)-methyltransferase 3A.